A 495-amino-acid polypeptide reads, in one-letter code: Dipeptide and tripeptide permease B (495 aa).

At 1-16 (MDNKVSILNQPKPFKM) the chain is on the cytoplasmic side. The chain crosses the membrane as a helical span at residues 17 to 37 (IFFIELWERFGYYGLQGILAV). The Periplasmic portion of the chain corresponds to 38-50 (YFVDKLGFSMQDS). Residues 51 to 71 (FVTFGAFAALVYGLVSVGGYV) form a helical membrane-spanning segment. Topologically, residues 72-80 (GDYVLGTKR) are cytoplasmic. Residues 81 to 101 (TMVFGAVVLALGYFLMGFSIL) traverse the membrane as a helical segment. Residues 102-104 (NPN) lie on the Periplasmic side of the membrane. A helical transmembrane segment spans residues 105-125 (FIYVALGAIAVGNGLFKANPS). The Cytoplasmic segment spans residues 126–144 (SLLAKCYEKGDSRLDGAFT). A helical transmembrane segment spans residues 145-165 (LYYMSINIGSLVSLSISPVIA). Topologically, residues 166–170 (NNYGY) are periplasmic. A helical transmembrane segment spans residues 171 to 191 (EYAFIICGLGLIASLFSYFSL). The Cytoplasmic segment spans residues 192 to 209 (RSTVQGIGSEPDALPLNK). The helical transmembrane segment at 210–230 (TKALIVLIGTIASTLVCAWLL) threads the bilayer. Position 231 (glutamine 231) is a topological domain, periplasmic. A helical transmembrane segment spans residues 232–252 (NIMMANLALGLIGVGVVGFFL). Residues 253-265 (KETFKEVGEQRNK) lie on the Cytoplasmic side of the membrane. A helical membrane pass occupies residues 266 to 286 (MIVAFILMLQAIIFYVLYAQM). Residues 287–309 (PTSLNFFAINNVHSELFGMDINP) lie on the Periplasmic side of the membrane. The helical transmembrane segment at 310-330 (VSLQALNPFWVIFCSPILAYL) threads the bilayer. Residues 331–348 (YTYYGNQNKDLSMPGKFT) are Cytoplasmic-facing. Residues 349-369 (VGMFMCAFGFLSVAAAGNWFA) form a helical membrane-spanning segment. Residues 370–373 (DQAG) are Periplasmic-facing. The helical transmembrane segment at 374 to 394 (MVSVWWMVLVYLFQSLGELMI) threads the bilayer. The Cytoplasmic portion of the chain corresponds to 395 to 409 (SGLGLAMVASLVPQR). A helical membrane pass occupies residues 410–430 (LMGFTMGAWFLTQAASFIIGG). Topologically, residues 431–454 (YVATFSATPEHLTDPLDTLPVYTE) are periplasmic. A helical transmembrane segment spans residues 455 to 475 (LFQNIGFVTLAVAIVMAITAP). The Cytoplasmic portion of the chain corresponds to 476 to 495 (KLNKMMTSSQPEDAELVEQP).

This sequence belongs to the major facilitator superfamily. Proton-dependent oligopeptide transporter (POT/PTR) (TC 2.A.17) family. DtpB subfamily.

Its subcellular location is the cell inner membrane. Proton-dependent permease that transports di- and tripeptides. This Aliivibrio fischeri (strain MJ11) (Vibrio fischeri) protein is Dipeptide and tripeptide permease B.